The primary structure comprises 563 residues: Arginine--tRNA ligase (563 aa).

It belongs to the class-I aminoacyl-tRNA synthetase family. In terms of assembly, monomer.

The enzyme catalyses tRNA(Arg) + L-arginine + ATP = L-arginyl-tRNA(Arg) + AMP + diphosphate. This is Arginine--tRNA ligase from Encephalitozoon cuniculi (strain GB-M1) (Microsporidian parasite).